Here is a 1518-residue protein sequence, read N- to C-terminus: Putative cellulose synthase 3 (1518 aa).

The interval 1–731 is catalytic; the sequence is MYGTWFTTGK…EEKLEKQSFV (731 aa). The next 3 helical transmembrane spans lie at 24–44, 71–91, and 105–125; these read PVWV…SVRI, ITVF…VWRL, and LAVL…LSYF. The catalytic subdomain A stretch occupies residues 144-237; it reads QWPSVDVFVP…FAVIFDCDHV (94 aa). Residues aspartate 186 and aspartate 330 contribute to the active site. Positions 314-374 are catalytic subdomain B; sequence EAVMGIGGFA…GQRVRWARGM (61 aa). Helical transmembrane passes span 404 to 424, 428 to 448, 465 to 485, 514 to 534, and 543 to 563; these read FLFA…LFLG, IAAS…HSVI, IYET…LLQP, ILAG…VWQF, and FILN…SIAV. Residues 569–668 enclose the PilZ domain; sequence QTRNAPRVSV…ERQVVSMVFG (100 aa). Residues 732 to 1518 are cyclic di-GMP binding domain; sequence LKPVPRSARH…IARDDLTGEL (787 aa). The disordered stretch occupies residues 765-785; that stretch reads APSPDQSGVTAETPFGDSNTG. Residues 768 to 785 are compositionally biased toward polar residues; the sequence is PDQSGVTAETPFGDSNTG. A helical membrane pass occupies residues 1481–1501; sequence ALYLAGLAGAGLAALGVWAWL.

In the N-terminal section; belongs to the glycosyltransferase 2 family. This sequence in the C-terminal section; belongs to the AcsB/BcsB family.

Its subcellular location is the cell inner membrane. It catalyses the reaction [(1-&gt;4)-beta-D-glucosyl](n) + UDP-alpha-D-glucose = [(1-&gt;4)-beta-D-glucosyl](n+1) + UDP + H(+). It participates in glycan metabolism; bacterial cellulose biosynthesis. The protein is Putative cellulose synthase 3 (bcsABII-B) of Komagataeibacter xylinus (Gluconacetobacter xylinus).